The primary structure comprises 638 residues: Chaperone protein HtpG (638 aa).

Residues 1 to 344 are a; substrate-binding; the sequence is MQKKETLEFQ…SNDLPLNVSR (344 aa). Residues 345-560 are b; it reads EILQNNENIY…ENDITTQMSK (216 aa). Residues 561–638 are c; it reads LLISTGQESP…LLLSNIIRLN (78 aa).

Belongs to the heat shock protein 90 family. In terms of assembly, homodimer.

Its subcellular location is the cytoplasm. Molecular chaperone. Has ATPase activity. This Wigglesworthia glossinidia brevipalpis protein is Chaperone protein HtpG.